Consider the following 278-residue polypeptide: Energy-coupling factor transporter ATP-binding protein EcfA (278 aa).

An ABC transporter domain is found at 5-240; sequence LETKNLVYNY…KEVIDEADLR (236 aa). ATP is bound at residue 38-45; sequence GHNGAGKS.

The protein belongs to the ABC transporter superfamily. Energy-coupling factor EcfA family. In terms of assembly, forms a stable energy-coupling factor (ECF) transporter complex composed of 2 membrane-embedded substrate-binding proteins (S component), 2 ATP-binding proteins (A component) and 2 transmembrane proteins (T component).

The protein localises to the cell membrane. Functionally, ATP-binding (A) component of a common energy-coupling factor (ECF) ABC-transporter complex. Unlike classic ABC transporters this ECF transporter provides the energy necessary to transport a number of different substrates. This Methanosphaera stadtmanae (strain ATCC 43021 / DSM 3091 / JCM 11832 / MCB-3) protein is Energy-coupling factor transporter ATP-binding protein EcfA.